The chain runs to 179 residues: Large ribosomal subunit protein uL5 (179 aa).

Belongs to the universal ribosomal protein uL5 family. In terms of assembly, part of the 50S ribosomal subunit; part of the 5S rRNA/L5/L18/L25 subcomplex. Contacts the 5S rRNA and the P site tRNA. Forms a bridge to the 30S subunit in the 70S ribosome.

This is one of the proteins that bind and probably mediate the attachment of the 5S RNA into the large ribosomal subunit, where it forms part of the central protuberance. In the 70S ribosome it contacts protein S13 of the 30S subunit (bridge B1b), connecting the 2 subunits; this bridge is implicated in subunit movement. Contacts the P site tRNA; the 5S rRNA and some of its associated proteins might help stabilize positioning of ribosome-bound tRNAs. This Synechococcus elongatus (strain ATCC 33912 / PCC 7942 / FACHB-805) (Anacystis nidulans R2) protein is Large ribosomal subunit protein uL5.